Reading from the N-terminus, the 308-residue chain is MPNNKVKENPMSLSPGAKFRLAVKTHHPLQIVGTINPYCAMMAKSIGHQAIYLSGGGIANASYGLPDLGITTLNDVLVDVERITNACDLPLLVDIDTGFGGAFNIARTIKAMEKAGAAAVHMEDQVAQKRCGHRPNKAIVSQQEMVDRVKAAVDARINPEFVIMARTDALAVEGMDSAIERAIACVEAGADMIFPEAMTELKQYEQFSTALRSATGKPVPILANITEFGQTPLYSGEQLAAVNVDMVLYPLSAFRAMNKAAENVYRHLLEHGNQEALLDQMQTRKELYAYLHYHEYEDKLDQLFSQPS.

A substrate-binding site is contributed by 54–56 (SGG). Mg(2+) is bound by residues Asp94 and Asp96. Substrate-binding positions include 131 to 132 (CG), Arg166, Glu196, 224 to 226 (NIT), Arg255, and Arg284.

Belongs to the isocitrate lyase/PEP mutase superfamily. Methylisocitrate lyase family. As to quaternary structure, homotetramer; dimer of dimers. Requires Mg(2+) as cofactor.

It catalyses the reaction (2S,3R)-3-hydroxybutane-1,2,3-tricarboxylate = pyruvate + succinate. It participates in organic acid metabolism; propanoate degradation. In terms of biological role, involved in the catabolism of short chain fatty acids (SCFA) via the 2-methylcitrate cycle I (propionate degradation route). Catalyzes the thermodynamically favored C-C bond cleavage reaction of (2R,3S)-2-methylisocitrate to yield pyruvate and succinate via an alpha-carboxy-carbanion intermediate. The protein is 2-methylisocitrate lyase of Vibrio cholerae serotype O1 (strain ATCC 39315 / El Tor Inaba N16961).